Here is a 361-residue protein sequence, read N- to C-terminus: Transposase A from transposon Tn554 (361 aa).

A Core-binding (CB) domain is found at 23–120; it reads YQLIEPVMKF…VVMSFLDYLS (98 aa). The 189-residue stretch at 163–351 folds into the Tyr recombinase domain; that stretch reads KQIRTLRSKE…SDQDMKNEFN (189 aa). Catalysis depends on residues R198, K232, H302, R305, and H328. The active-site O-(3'-phospho-DNA)-tyrosine intermediate is the Y338.

The protein belongs to the 'phage' integrase family.

Its function is as follows. One of three proteins encoded by transposon Tn554 required for its transposition. In Staphylococcus aureus (strain Mu50 / ATCC 700699), this protein is Transposase A from transposon Tn554 (tnpA1).